The sequence spans 355 residues: Uroporphyrinogen decarboxylase (355 aa).

Residues Arg-27–Arg-31, Asp-77, Tyr-154, Thr-209, and His-328 contribute to the substrate site.

This sequence belongs to the uroporphyrinogen decarboxylase family. As to quaternary structure, homodimer.

The protein resides in the cytoplasm. It carries out the reaction uroporphyrinogen III + 4 H(+) = coproporphyrinogen III + 4 CO2. It participates in porphyrin-containing compound metabolism; protoporphyrin-IX biosynthesis; coproporphyrinogen-III from 5-aminolevulinate: step 4/4. Catalyzes the decarboxylation of four acetate groups of uroporphyrinogen-III to yield coproporphyrinogen-III. The polypeptide is Uroporphyrinogen decarboxylase (Aliivibrio salmonicida (strain LFI1238) (Vibrio salmonicida (strain LFI1238))).